Here is a 203-residue protein sequence, read N- to C-terminus: A-type ATP synthase subunit E (203 aa).

Belongs to the V-ATPase E subunit family. As to quaternary structure, has multiple subunits with at least A(3), B(3), C, D, E, F, H, I and proteolipid K(x).

The protein localises to the cell membrane. Functionally, component of the A-type ATP synthase that produces ATP from ADP in the presence of a proton gradient across the membrane. This is A-type ATP synthase subunit E from Methanococcus maripaludis (strain C7 / ATCC BAA-1331).